The chain runs to 156 residues: Small ribosomal subunit protein uS7 (156 aa).

It belongs to the universal ribosomal protein uS7 family. Part of the 30S ribosomal subunit. Contacts proteins S9 and S11.

Functionally, one of the primary rRNA binding proteins, it binds directly to 16S rRNA where it nucleates assembly of the head domain of the 30S subunit. Is located at the subunit interface close to the decoding center, probably blocks exit of the E-site tRNA. The sequence is that of Small ribosomal subunit protein uS7 from Bordetella petrii (strain ATCC BAA-461 / DSM 12804 / CCUG 43448).